A 240-amino-acid polypeptide reads, in one-letter code: MORN repeat-containing protein 3 (240 aa).

The interaction with MDM2 stretch occupies residues 6–35; that stretch reads CPKKSESLWKGWDRKAQRNGLRSQVYAVNG. MORN repeat units follow at residues 38–60, 62–84, 91–113, 114–136, 137–159, 160–182, and 184–205; these read YVGE…KKGA, YEGD…DQQT, YSGW…PKEY, YEGD…NGDI, YEGQ…NGNR, YEGC…DHGQ, and FEGF…GRDE. Positions 76 to 100 are interaction with SIRT1; the sequence is TLSLPDQQTGKCRRVYSGWWKGDKK. The interval 206 to 240 is interaction with TP53; sequence APEPTQFPIPEVKILDPDGVLAEALAMFRKTEEGD.

Interacts with MEIG1. Interacts with TP53, MDM2 and SIRT1; the interactions mediate post-transcriptional modifications of TP53 by MDM2 and SIRT1.

The protein localises to the cytoplasmic vesicle. It is found in the secretory vesicle. Its subcellular location is the acrosome. Assembles a suppression complex (suppresome) by tethering SIRT1 and MDM2 to regulate composite modifications of p53/TP53. Confers both deacetylation-mediated functional inactivation, by SIRT1, and ubiquitination-dependent degradation, by MDM2, of p53/TP53, promoting a proliferative and cell survival behaviors. May play a role in the regulation of spermatogenesis. This Homo sapiens (Human) protein is MORN repeat-containing protein 3.